We begin with the raw amino-acid sequence, 314 residues long: Homoserine kinase (314 aa).

96–106 serves as a coordination point for ATP; the sequence is PIGSGLGSSAC.

The protein belongs to the GHMP kinase family. Homoserine kinase subfamily.

It is found in the cytoplasm. It catalyses the reaction L-homoserine + ATP = O-phospho-L-homoserine + ADP + H(+). It participates in amino-acid biosynthesis; L-threonine biosynthesis; L-threonine from L-aspartate: step 4/5. Its function is as follows. Catalyzes the ATP-dependent phosphorylation of L-homoserine to L-homoserine phosphate. The sequence is that of Homoserine kinase from Mannheimia succiniciproducens (strain KCTC 0769BP / MBEL55E).